The following is a 529-amino-acid chain: All-trans-zeta-carotene desaturase (529 aa).

Isoleucine 12–glycine 45 is an FAD binding site.

Belongs to the carotenoid/retinoid oxidoreductase family. It depends on FAD as a cofactor.

It catalyses the reaction all-trans-zeta-carotene + 2 A = all-trans-lycopene + 2 AH2. It participates in carotenoid biosynthesis; lycopene biosynthesis. Dehydrogenates carotenes in the trans conformation: converts all-trans-zeta-carotene into all-trans-lycopene, one of the last dehydrogenation steps of lycopene biosynthesis. In Myxococcus xanthus, this protein is All-trans-zeta-carotene desaturase (carC).